The chain runs to 457 residues: Siroheme synthase (457 aa).

A precorrin-2 dehydrogenase /sirohydrochlorin ferrochelatase region spans residues 1 to 204 (MDHLPIFCQL…ADEKAVNATT (204 aa)). NAD(+) is bound by residues 22-23 (DV) and 43-44 (LT). Ser-128 bears the Phosphoserine mark. Residues 216–457 (GEVVLVGAGP…RDKLNWFSSH (242 aa)) are uroporphyrinogen-III C-methyltransferase. An S-adenosyl-L-methionine-binding site is contributed by Pro-225. The Proton acceptor role is filled by Asp-248. Lys-270 (proton donor) is an active-site residue. Residues 301 to 303 (GGD), Ile-306, 331 to 332 (TA), Met-382, and Gly-411 each bind S-adenosyl-L-methionine.

In the N-terminal section; belongs to the precorrin-2 dehydrogenase / sirohydrochlorin ferrochelatase family. It in the C-terminal section; belongs to the precorrin methyltransferase family.

The enzyme catalyses uroporphyrinogen III + 2 S-adenosyl-L-methionine = precorrin-2 + 2 S-adenosyl-L-homocysteine + H(+). It catalyses the reaction precorrin-2 + NAD(+) = sirohydrochlorin + NADH + 2 H(+). It carries out the reaction siroheme + 2 H(+) = sirohydrochlorin + Fe(2+). The protein operates within cofactor biosynthesis; adenosylcobalamin biosynthesis; precorrin-2 from uroporphyrinogen III: step 1/1. It functions in the pathway cofactor biosynthesis; adenosylcobalamin biosynthesis; sirohydrochlorin from precorrin-2: step 1/1. It participates in porphyrin-containing compound metabolism; siroheme biosynthesis; precorrin-2 from uroporphyrinogen III: step 1/1. Its pathway is porphyrin-containing compound metabolism; siroheme biosynthesis; siroheme from sirohydrochlorin: step 1/1. The protein operates within porphyrin-containing compound metabolism; siroheme biosynthesis; sirohydrochlorin from precorrin-2: step 1/1. Its function is as follows. Multifunctional enzyme that catalyzes the SAM-dependent methylations of uroporphyrinogen III at position C-2 and C-7 to form precorrin-2 via precorrin-1. Then it catalyzes the NAD-dependent ring dehydrogenation of precorrin-2 to yield sirohydrochlorin. Finally, it catalyzes the ferrochelation of sirohydrochlorin to yield siroheme. This chain is Siroheme synthase, found in Salmonella arizonae (strain ATCC BAA-731 / CDC346-86 / RSK2980).